The following is a 352-amino-acid chain: Histidine biosynthesis bifunctional protein HisB (352 aa).

Residues 1–164 are histidinol-phosphatase; the sequence is MSQKILFIDR…EIENEILSSF (164 aa). The Nucleophile role is filled by Asp9. Mg(2+)-binding residues include Asp9 and Asp11. Asp11 functions as the Proton donor in the catalytic mechanism. Positions 93, 95, 101, and 103 each coordinate Zn(2+). Asp130 provides a ligand contact to Mg(2+). Residues 165 to 352 form an imidazoleglycerol-phosphate dehydratase region; it reads RSASYQRTTK…ENLASSKGVI (188 aa).

The protein in the N-terminal section; belongs to the histidinol-phosphatase family. This sequence in the C-terminal section; belongs to the imidazoleglycerol-phosphate dehydratase family. Mg(2+) serves as cofactor. Requires Zn(2+) as cofactor.

The protein localises to the cytoplasm. It catalyses the reaction D-erythro-1-(imidazol-4-yl)glycerol 3-phosphate = 3-(imidazol-4-yl)-2-oxopropyl phosphate + H2O. The enzyme catalyses L-histidinol phosphate + H2O = L-histidinol + phosphate. The protein operates within amino-acid biosynthesis; L-histidine biosynthesis; L-histidine from 5-phospho-alpha-D-ribose 1-diphosphate: step 6/9. It functions in the pathway amino-acid biosynthesis; L-histidine biosynthesis; L-histidine from 5-phospho-alpha-D-ribose 1-diphosphate: step 8/9. This chain is Histidine biosynthesis bifunctional protein HisB, found in Campylobacter jejuni subsp. jejuni serotype O:6 (strain 81116 / NCTC 11828).